Consider the following 1036-residue polypeptide: Non-canonical non-ribosomal peptide synthetase FUB8 (1036 aa).

The adenylation (A) domain stretch occupies residues 21 to 343; it reads EIARDEPDRV…LASVVTHPDE (323 aa). Positions 544–621 constitute a Carrier domain; the sequence is TTEDVVRSGI…QLAHTVWSHL (78 aa). Serine 579 carries the O-(pantetheine 4'-phosphoryl)serine modification. The interval 658-899 is thioester reductase (TR) domain; the sequence is LTGTTGEIGS…IPIDLLTEVI (242 aa).

It functions in the pathway mycotoxin biosynthesis. Functionally, non-canonical non-ribosomal peptide synthetase; part of the gene cluster that mediates the biosynthesis of fusaric acid, a mycotoxin with low to moderate toxicity to animals and humans, but with high phytotoxic properties. L-aspartate is suggested as fusaric acid amino acid precursor that is activated and further processed to O-acetyl-L-homoserine by cluster enzymes aspartate kinase FUB3 and homoserine O-acetyltransferase FUB5, as well as enzymes of the primary metabolism. The polyketide synthase (PKS) FUB1 generates the triketide trans-2-hexenal which is presumptively released by the hydrolase FUB4 and linked to the NRPS-bound amino acid precursor by NAD(P)-dependent dehydrogenase FUB6. FUB1, FUB4, and the non-canonical NRPS Fub8 may form an enzyme complex. Further processing of the NRPS-bound intermediate might be carried out by FUB6 and the sulfhydrylase FUB7, enabling a spontaneous electrocyclization to close the carbon backbone of fusaric acid. Dihydrofusaric acid is likely to be released via reduction by the thioester reductase (TR) domain of FUB8 whereupon the final oxidation to fusaric acid may (also) be performed by the FMN-dependent dehydrogenase FUB9. This is Non-canonical non-ribosomal peptide synthetase FUB8 from Fusarium oxysporum f. sp. lycopersici (strain 4287 / CBS 123668 / FGSC 9935 / NRRL 34936) (Fusarium vascular wilt of tomato).